The sequence spans 210 residues: Noranthrone monooxygenase (210 aa).

The next 4 membrane-spanning stretches (helical) occupy residues 59–79, 105–125, 131–151, and 188–208; these read TGSFLTGAMMNLHLLTIPILI, GIALVTGALYGYAAWAKYSVG, WMVAGVTTVSMVPYTWMFMNA, and VRALFPLAGSVMGMLGVCGVV.

It belongs to the anthrone oxygenase family.

It localises to the membrane. It carries out the reaction noranthrone + O2 = norsolorinic acid + H2O. Its pathway is mycotoxin biosynthesis; aflatoxin biosynthesis. Functionally, monooxygenase that converts norsolorinic acid anthrone to norsolorinic acid during aflatoxin biosynthesis. The polypeptide is Noranthrone monooxygenase (hypC) (Aspergillus flavus (strain ATCC 200026 / FGSC A1120 / IAM 13836 / NRRL 3357 / JCM 12722 / SRRC 167)).